Reading from the N-terminus, the 302-residue chain is Sulfotransferase 1C4 (302 aa).

Lys55 to Trp60 contributes to the 3'-phosphoadenylyl sulfate binding site. Residue Lys113 to His115 participates in substrate binding. His115 serves as the catalytic Proton acceptor. 3'-phosphoadenylyl sulfate contacts are provided by residues Arg137, Ser145, Tyr200, Thr234–Met239, and Phe262–Gly266.

It belongs to the sulfotransferase 1 family. Expressed in liver, kidney and jejunum.

The protein localises to the cytoplasm. It is found in the cytosol. The enzyme catalyses a phenol + 3'-phosphoadenylyl sulfate = an aryl sulfate + adenosine 3',5'-bisphosphate + H(+). It catalyses the reaction 17beta-estradiol + 3'-phosphoadenylyl sulfate = 17beta-estradiol 3-sulfate + adenosine 3',5'-bisphosphate + H(+). The catalysed reaction is bisphenol A + 3'-phosphoadenylyl sulfate = bisphenyl A sulfate + adenosine 3',5'-bisphosphate + H(+). Sulfotransferase that utilizes 3'-phospho-5'-adenylyl sulfate (PAPS) as sulfonate donor to catalyze the sulfate conjugation of phenolic compounds and estrogen (E2). Can also sulfonate estrogenic compounds, however, the dietary flavonoids (phytoestrogen) and environmental estrogens, like bisphenol A are better substrates than 17beta-estradiol (E2). This is Sulfotransferase 1C4 (SULT1C4) from Macaca fascicularis (Crab-eating macaque).